The primary structure comprises 1080 residues: Histone-lysine N-methyltransferase, H3 lysine-4 specific (1080 aa).

3 disordered regions span residues 1–46, 54–73, and 78–121; these read MSNY…SQYN, NDGT…NNAS, and YATN…SSGS. The tract at residues 1 to 230 is binds SWD2; sequence MSNYYRRAHA…THRKCRNSLI (230 aa). Positions 11 to 28 are enriched in polar residues; it reads SSGSYRQPQEQPQYSRSG. The span at 29–46 shows a compositional bias: low complexity; it reads HYQYSNGHSHQQYSSQYN. Basic and acidic residues predominate over residues 54–67; sequence NDGTRRRYNDDRPH. Composition is skewed to polar residues over residues 78–87 and 99–121; these read YATNNSQSGP and RGMS…SSGS. The tract at residues 230-569 is binds RNA; that stretch reads ILLPRISYDR…ALDHANFPEL (340 aa). A binds SHG1 region spans residues 356–569; that stretch reads KKLQKLQENL…ALDHANFPEL (214 aa). Ser-625 is modified (phosphoserine). Residues 646 to 729 are disordered; that stretch reads AHLLNEETDS…DQNGSSDVLD (84 aa). The span at 674 to 692 shows a compositional bias: acidic residues; that stretch reads DEEDENMTSSSSEEEEEEA. Over residues 693–712 the composition is skewed to basic and acidic residues; sequence PDKKFKSESEPTTPESDHLH. The segment at 762 to 938 is binds SPP1; sequence MDLQNAIKDE…SLNQLNKRKK (177 aa). The interval 762–938 is contributes to RNA binding; sequence MDLQNAIKDE…SLNQLNKRKK (177 aa). The required for catalytic activity stretch occupies residues 762–938; sequence MDLQNAIKDE…SLNQLNKRKK (177 aa). At Thr-875 the chain carries Phosphothreonine. Basic and acidic residues-rich tracts occupy residues 877–890 and 899–909; these read ELCQ…KEPS and SSRDNRASNRR. The disordered stretch occupies residues 877 to 909; it reads ELCQREESSNKEPSDSVPQEVSSSRDNRASNRR. The RxxxRR motif motif lies at 904 to 909; the sequence is RASNRR. The SET domain occupies 938–1055; the sequence is KPVMFARSAI…ASEELTYDYK (118 aa). Tyr-1054 lines the S-adenosyl-L-methionine pocket. In terms of domain architecture, Post-SET spans 1064–1080; the sequence is ERLPCLCGAPNCKGFLN.

It belongs to the class V-like SAM-binding methyltransferase superfamily. As to quaternary structure, component of the Set1C/COMPASS complex which consists of SET1(2), BRE2(2), SPP1(2), SDC1(1), SHG1(1), SWD1(1), SWD2(1), and SWD3(1). Interacts with MEC3.

Its subcellular location is the nucleus. It localises to the chromosome. It catalyses the reaction L-lysyl(4)-[histone H3] + 3 S-adenosyl-L-methionine = N(6),N(6),N(6)-trimethyl-L-lysyl(4)-[histone H3] + 3 S-adenosyl-L-homocysteine + 3 H(+). The enzyme catalyses N(6)-methyl-L-lysyl(4)-[histone H3] + S-adenosyl-L-methionine = N(6),N(6)-dimethyl-L-lysyl(4)-[histone H3] + S-adenosyl-L-homocysteine + H(+). It carries out the reaction N(6),N(6)-dimethyl-L-lysyl(4)-[histone H3] + S-adenosyl-L-methionine = N(6),N(6),N(6)-trimethyl-L-lysyl(4)-[histone H3] + S-adenosyl-L-homocysteine + H(+). Its function is as follows. Catalytic component of the COMPASS (Set1C) complex that specifically mono-, di- and trimethylates histone H3 to form H3K4me1/2/3. Binds RNAs involved in chromosome segregation, splicing and transcriptional regulation; appears to bind transcripts both co- and post-transcriptionally and binding might negatively affect its histone methyltransferase activity. COMPASS recognizes ubiquitinated H2B on one face of the nucleosome which stimulates the methylation of H3 on the opposing face. Plays a role in telomere length maintenance and transcription elongation regulation. In Saccharomyces cerevisiae (strain ATCC 204508 / S288c) (Baker's yeast), this protein is Histone-lysine N-methyltransferase, H3 lysine-4 specific.